The following is a 208-amino-acid chain: 3-demethoxyubiquinol 3-hydroxylase (208 aa).

Residues Glu-57, Glu-87, His-90, Glu-139, Glu-171, and His-174 each contribute to the Fe cation site.

It belongs to the COQ7 family. It depends on Fe cation as a cofactor.

The protein localises to the cell membrane. The catalysed reaction is a 5-methoxy-2-methyl-3-(all-trans-polyprenyl)benzene-1,4-diol + AH2 + O2 = a 3-demethylubiquinol + A + H2O. Its pathway is cofactor biosynthesis; ubiquinone biosynthesis. Functionally, catalyzes the hydroxylation of 2-nonaprenyl-3-methyl-6-methoxy-1,4-benzoquinol during ubiquinone biosynthesis. The protein is 3-demethoxyubiquinol 3-hydroxylase of Burkholderia ambifaria (strain MC40-6).